Reading from the N-terminus, the 106-residue chain is Large ribosomal subunit protein uL24 (106 aa).

Belongs to the universal ribosomal protein uL24 family. In terms of assembly, part of the 50S ribosomal subunit.

Its function is as follows. One of two assembly initiator proteins, it binds directly to the 5'-end of the 23S rRNA, where it nucleates assembly of the 50S subunit. In terms of biological role, one of the proteins that surrounds the polypeptide exit tunnel on the outside of the subunit. This Acidithiobacillus ferrooxidans (strain ATCC 53993 / BNL-5-31) (Leptospirillum ferrooxidans (ATCC 53993)) protein is Large ribosomal subunit protein uL24.